The chain runs to 116 residues: Large ribosomal subunit protein bL17 (116 aa).

It belongs to the bacterial ribosomal protein bL17 family. As to quaternary structure, part of the 50S ribosomal subunit. Contacts protein L32.

The polypeptide is Large ribosomal subunit protein bL17 (Synechococcus sp. (strain CC9902)).